The primary structure comprises 71 residues: Antitoxin VapB26 (71 aa).

Antitoxin component of a type II toxin-antitoxin (TA) system. Upon expression in M.smegmatis neutralizes the effect of cognate toxin VapC26. This is Antitoxin VapB26 (vapB26) from Mycobacterium tuberculosis (strain ATCC 25618 / H37Rv).